We begin with the raw amino-acid sequence, 349 residues long: Protein RecA (349 aa).

67-74 (GPESSGKT) serves as a coordination point for ATP.

Belongs to the RecA family.

It is found in the cytoplasm. Functionally, can catalyze the hydrolysis of ATP in the presence of single-stranded DNA, the ATP-dependent uptake of single-stranded DNA by duplex DNA, and the ATP-dependent hybridization of homologous single-stranded DNAs. It interacts with LexA causing its activation and leading to its autocatalytic cleavage. The sequence is that of Protein RecA from Chlamydia abortus (strain DSM 27085 / S26/3) (Chlamydophila abortus).